We begin with the raw amino-acid sequence, 469 residues long: Uronate isomerase (469 aa).

This sequence belongs to the metallo-dependent hydrolases superfamily. Uronate isomerase family.

The enzyme catalyses D-glucuronate = D-fructuronate. It catalyses the reaction aldehydo-D-galacturonate = keto-D-tagaturonate. It functions in the pathway carbohydrate metabolism; pentose and glucuronate interconversion. In Yersinia enterocolitica serotype O:8 / biotype 1B (strain NCTC 13174 / 8081), this protein is Uronate isomerase.